Consider the following 101-residue polypeptide: Protein RADIALIS-like 2 (101 aa).

One can recognise an SANT domain in the interval 9-64 (YGSGSWTVKQNKAFERALAVYDQDTPDRWHNVARAVGGKTPEEAKRQYDLLVRDIE). Residues 69–101 (GHVPFPDYKTTTGNSNRGRLRDEEKRMRSMKLQ) are disordered.

As to expression, expressed in the funiculus of ovules and in embryos. In young ovules, expression is observed in the adaxial side of the funiculus (the stalk connecting the embryo sac to the placenta). Also expressed in heart-stage embryos, in the cortex and endodermis of the hypocotyl region but not in the cotyledons, shoot and root apical meristems, provasculature or epidermis. Not detected in young seedlings, mature roots or in young floral primordia.

It is found in the nucleus. Functionally, probable transcription factor. Required for female gametophyte development. The sequence is that of Protein RADIALIS-like 2 (RL2) from Arabidopsis thaliana (Mouse-ear cress).